The primary structure comprises 260 residues: Phosphate import ATP-binding protein PstB 1 (260 aa).

Residues 8-255 enclose the ABC transporter domain; it reads TETKNVYDVL…PEHKRTEDYV (248 aa). 46–53 lines the ATP pocket; it reads GPSGCGKS.

Belongs to the ABC transporter superfamily. Phosphate importer (TC 3.A.1.7) family. In terms of assembly, the complex is composed of two ATP-binding proteins (PstB), two transmembrane proteins (PstC and PstA) and a solute-binding protein (PstS).

It is found in the cell membrane. It carries out the reaction phosphate(out) + ATP + H2O = ADP + 2 phosphate(in) + H(+). Its function is as follows. Part of the ABC transporter complex PstSACB involved in phosphate import. Responsible for energy coupling to the transport system. This chain is Phosphate import ATP-binding protein PstB 1, found in Shouchella clausii (strain KSM-K16) (Alkalihalobacillus clausii).